The following is a 286-amino-acid chain: Ribosome-inactivating protein momordin II (286 aa).

An N-terminal signal peptide occupies residues methionine 1–glycine 23. Glutamate 181 is an active-site residue.

It belongs to the ribosome-inactivating protein family. Type 1 RIP subfamily.

The catalysed reaction is Endohydrolysis of the N-glycosidic bond at one specific adenosine on the 28S rRNA.. The chain is Ribosome-inactivating protein momordin II from Momordica balsamina (Bitter gourd).